A 1406-amino-acid chain; its full sequence is MASCASIDIEDATQHLRDILKLDRPAGGSNAESQRPSSAYNGDLNGLLVPDPLSSGDGNSTNKPGIRTMPPINLQEKQVICLSGDDSSTCIGILAKEVEIVASSDSSISSKARGSNKVKIQPVAKYDWEQKYYYGNLIAVSNSFLAYAIRAANNGSAMVRVISVSTSERTLLKGFTGSVADLAFAHLNSPQLACLDEAGNLFVWRLALVKGKIQEEILVHIRQPEGTALNHFRRIIWCPFIPEESEDCCEESSPTVALLHEDRAEVWDLDMLRSSHNTWPVDVSQIKQGFIVVKGHSTCLSEGALSPDGTVLATASHDGFVKFWQIYIEGQDEPRCLHEWKPHDGRPLSCLLFCDNHKKQDPEVPFWRFLITGADQNRELKMWCTVSWTCLQTIRFSPDIFSSVSVPPSLKVCLDLSAEYLILSDVQRKVLYVMELLQNQDEGRACFSSISEFLLTHPVLSFGIQVVSRCRLRHTEVLPAEEENDSLGTESSHGAGALESAAGVLIKLFCVHTKALQDVQIRFQPQLNPDVVAPLSTHTAHEDFTFGESRPELGSEGLASAAHGSQPDLRRIVELPAPADFLSLSSETKPELMTPDAFMTPTASLQQISASPSSSSSSSSSSSSSSSSSSSSLTAVSAVSSSSAMDPSLPRPPEELTLSPKLQLDGSLTLNSSSSSLQASPRSLLPGLLPGPADKLISKGPGQVSTAASALSLDLQEVEPLGLPQASPSRTRSPDVISSASTALSQDIPEIASEALSRGFGSSVPEGLIEPNSMASAASALHLLSPRPRQGPELGSQLGLDGGPGDGDRHSTPSLLEAALTQEVATPDSQVWPTAPDITRETCSTLTESPRNGLQEKHKSLAFHRPPYHLLQQRDSQDTSAEQSDHDDEVASLASASGGFGSKIPTPRLPSKDWKTKGSPRTSPKLKRKSKKDDGDSAVGSRLTEHQVAEPPEDWPALIWQQQRELAELWHNQEELLQRLCAQLEGLQSTVTDHVERALETRHEQEQRRLERALAEGQQRGGQLQEQLTQQLSQALSSAVAGRLERSVRDEIKKTVPPCVSRSLEPVAGQLSNSVATKLTAVEGSMKENISKLLKSKNLTDAIARAAADTLQGPMQAAYREAFQSVVLPAFEKSCQAMFQQINDSFRLGTQEYLQQLESHMKSRKAREQEAREPVLAQLRGLVSTLQSATEQMAATVSSSVRAEVQHQLHVAVGSLQESILAQVQRIVKGEVSVALKEQQATVTSSIMQAMRSAAGTPVPSAHLDCQAQQAHILQLLQQGHLNQAFQQALTAADLNLVLYVCETVDPAQVFGQPPCPLSQPVLLSLIQQLASDLGTRSDLKLSYLEEAVMHLDHSDPITRDHMGSVMAQVRQKLFQFLQADPHNSLSKAARRLSLMLHGLVTPSLP.

A2 carries the N-acetylalanine modification. S3 and S6 each carry phosphoserine. K125 carries the post-translational modification N6-acetyllysine. WD repeat units lie at residues 174–214 (GFTG…GKIQ), 230–277 (NHFR…SSHN), 295–334 (GHST…QDEP), and 342–393 (PHDG…CLQT). S560, S565, S583, and S585 each carry phosphoserine. Disordered stretches follow at residues 604 to 631 (SLQQ…SSSS) and 667 to 686 (SLTL…SLLP). A compositionally biased stretch (low complexity) spans 609–631 (SASPSSSSSSSSSSSSSSSSSSS). S680, S712, S727, and S729 each carry phosphoserine. The disordered stretch occupies residues 719-744 (EPLGLPQASPSRTRSPDVISSASTAL). Polar residues predominate over residues 726–744 (ASPSRTRSPDVISSASTAL). Residue T731 is modified to Phosphothreonine. 2 positions are modified to phosphoserine: S733 and S745. Disordered stretches follow at residues 782-855 (HLLS…NGLQ) and 873-951 (QRDS…VAEP). Composition is skewed to polar residues over residues 823–832 (EVATPDSQVW) and 841–852 (ETCSTLTESPRN). T826 carries the phosphothreonine modification. S849 and S876 each carry phosphoserine. The residue at position 879 (T879) is a Phosphothreonine. A phosphoserine mark is found at S880, S884, S892, S895, and S897. T906 carries the phosphothreonine modification. Positions 971 to 1030 (HNQEELLQRLCAQLEGLQSTVTDHVERALETRHEQEQRRLERALAEGQQRGGQLQEQLTQ) form a coiled coil. Residue S1385 is modified to Phosphoserine.

Belongs to the WD repeat EDC4 family. As to quaternary structure, part of a decapping complex consisting of DCP1A, DCP2, EDC3, EDC4 and probably DDX6. Part of a complex consisting of DCP1A, EDC3, EDC4 and DDX6. Part of a complex consisting of DCP1B, EDC3, EDC4 and DDX6. Interacts with DCP2. Interacts with RC3H1. Interacts with NBDY. Interacts with Tex19.1 and, probably, Tex19.2. Interacts with LSM14A. Interacts with DDX6.

Its subcellular location is the cytoplasm. The protein localises to the P-body. The protein resides in the nucleus. Functionally, in the process of mRNA degradation, seems to play a role in mRNA decapping. Component of a complex containing DCP2 and DCP1A which functions in decapping of ARE-containing mRNAs. Promotes complex formation between DCP1A and DCP2. Enhances the catalytic activity of DCP2 (in vitro). The protein is Enhancer of mRNA-decapping protein 4 of Mus musculus (Mouse).